The following is a 376-amino-acid chain: Peroxisomal membrane protein PEX14 (376 aa).

The span at Met-1 to Gln-12 shows a compositional bias: polar residues. Positions Met-1 to Pro-24 are disordered. Position 2 is an N-acetylalanine (Ala-2). Topologically, residues Ala-2–Asp-108 are peroxisomal. Lys-34 carries the post-translational modification N6-acetyllysine. The tract at residues Ser-70–Arg-102 is disordered. Residues Pro-88–Tyr-99 are compositionally biased toward pro residues. Residues Tyr-109–Tyr-127 traverse the membrane as a helical segment. Over Lys-128 to Asp-376 the chain is Cytoplasmic. A disordered region spans residues Pro-230–Asp-376. Phosphoserine is present on Ser-232. Composition is skewed to low complexity over residues Ser-247–His-259 and Ser-265–Ser-275. 2 positions are modified to phosphoserine: Ser-282 and Ser-334. A compositionally biased stretch (acidic residues) spans Lys-323–Val-341. A compositionally biased stretch (basic and acidic residues) spans Gln-359 to Asp-376.

Belongs to the peroxin-14 family. Interacts with PEX13; forming the PEX13-PEX14 docking complex. Interacts with PEX5 (via WxxxF/Y motifs). Interacts with PEX19. Interacts with tubulin.

It localises to the peroxisome membrane. Its function is as follows. Component of the PEX13-PEX14 docking complex, a translocon channel that specifically mediates the import of peroxisomal cargo proteins bound to PEX5 receptor. The PEX13-PEX14 docking complex forms a large import pore which can be opened to a diameter of about 9 nm. Mechanistically, PEX5 receptor along with cargo proteins associates with the PEX14 subunit of the PEX13-PEX14 docking complex in the cytosol, leading to the insertion of the receptor into the organelle membrane with the concomitant translocation of the cargo into the peroxisome matrix. Plays a key role for peroxisome movement through a direct interaction with tubulin. This chain is Peroxisomal membrane protein PEX14, found in Mus musculus (Mouse).